A 298-amino-acid chain; its full sequence is Proline iminopeptidase (298 aa).

Positions 26 to 277 constitute an AB hydrolase-1 domain; it reads VLLLHGGPAM…NGSHLAMWDD (252 aa). The Nucleophile role is filled by Ser103. Residue Asp244 is part of the active site. The active-site Proton donor is His271.

The protein belongs to the peptidase S33 family. As to quaternary structure, monomer.

The catalysed reaction is Release of N-terminal proline from a peptide.. Releases the N-terminal proline from various substrates. Cleaves specifically Pro-betaNA and small peptides containing proline at the amino terminal. No activity against hydroxyproline-betaNA. The sequence is that of Proline iminopeptidase (fpaP) from Elizabethkingia meningoseptica (Chryseobacterium meningosepticum).